Here is a 359-residue protein sequence, read N- to C-terminus: Medium-wave-sensitive opsin 1 (359 aa).

Residues Met1–Val47 lie on the Extracellular side of the membrane. The interval Asp12–Pro38 is required for 11-cis-retinal regeneration. An N-linked (GlcNAc...) asparagine glycan is attached at Asn29. The chain crosses the membrane as a helical span at residues Tyr48 to Ala72. Topologically, residues Thr73–Asn84 are cytoplasmic. Residues Trp85 to Ile110 traverse the membrane as a helical segment. The Extracellular portion of the chain corresponds to Tyr111–Glu124. Cys121 and Cys198 are oxidised to a cystine. A helical transmembrane segment spans residues Gly125–Trp144. The Cytoplasmic portion of the chain corresponds to Glu145–Leu163. The helical transmembrane segment at Ala164–Ser187 threads the bilayer. At Arg188 to Ser213 the chain is on the extracellular side. The helical transmembrane segment at Tyr214–Ile241 threads the bilayer. Residues Arg242–Arg263 lie on the Cytoplasmic side of the membrane. Residues Met264 to Thr287 form a helical membrane-spanning segment. At Ala288–His295 the chain is on the extracellular side. Residues Pro296–Met320 traverse the membrane as a helical segment. At Lys307 the chain carries N6-(retinylidene)lysine. Residues Asn321–Ala359 lie on the Cytoplasmic side of the membrane.

It belongs to the G-protein coupled receptor 1 family. Opsin subfamily. As to quaternary structure, monomer. Homodimer. Homotetramer. In terms of processing, N-glycosylated. O-glycosylated. Post-translationally, phosphorylated on some or all of the serine and threonine residues present in the C-terminal region. As to expression, expressed in retina (at protein level). Expressed in cone photoreceptor cells (at protein level).

It is found in the cell membrane. Functionally, visual pigments are the light-absorbing molecules that mediate vision. They consist of an apoprotein, opsin, covalently linked to cis-retinal. May increase spectral sensitivity in dim light. The protein is Medium-wave-sensitive opsin 1 (Opn1mw) of Mus musculus (Mouse).